A 347-amino-acid chain; its full sequence is Homoisocitrate dehydrogenase (347 aa).

Residue 68–70 coordinates NADH; that stretch reads ITS. Ser70 contacts (2R,3S)-homoisocitrate. Position 81 is a phosphoserine (Ser81). (2R,3S)-homoisocitrate is bound by residues Arg87, Arg97, Arg128, Tyr135, Lys181, and Asn183. An NADH-binding site is contributed by Asn183. Asp213, Asp237, and Asp241 together coordinate Mg(2+). NADH-binding positions include 270 to 274 and Asn282; that span reads GSAPD.

The protein belongs to the isocitrate and isopropylmalate dehydrogenases family. Mg(2+) is required as a cofactor.

The catalysed reaction is (2R,3S)-homoisocitrate + NAD(+) = 2-oxoadipate + CO2 + NADH. The enzyme catalyses (2R,3S)-iso(homo)2citrate + NAD(+) = 2-oxoheptanedioate + CO2 + NADH. It catalyses the reaction (2R,3S)-iso(homo)3citrate + NAD(+) = 2-oxosuberate + CO2 + NADH. It participates in organic acid metabolism; 2-oxosuberate biosynthesis. Catalyzes the NAD-dependent oxidation and decarboxylation of (2R,3S)-homoisocitrate, (2R,3S)-homo(2)-isocitrate and (2R,3S)-homo(3)-isocitrate, into 2-oxoadipate, 2-oxopimelate (2-oxoheptanedioate), and 2-oxosuberate, respectively. All these substrates are intermediates in the biosynthesis of biotin and of 7-mercaptoheptanoate, a moiety of coenzyme B in methanoarchaea. Is also able to produce 2-oxoazelate from (2R,3S)-homo(4)-isocitrate in vitro, but this substrate is probably not physiologically relevant. Is unable to use any isomer of isocitrate or isopropylmalate as a substrate, and NADP as an oxidant. The chain is Homoisocitrate dehydrogenase (aksF) from Methanocaldococcus jannaschii (strain ATCC 43067 / DSM 2661 / JAL-1 / JCM 10045 / NBRC 100440) (Methanococcus jannaschii).